The primary structure comprises 105 residues: Small cysteine and glycine repeat-containing protein 6 (105 aa).

Residues 4-83 (CGCGGCGGGC…HSCGCGCGCG (80 aa)) form a 13 X 2 AA repeats of CG region.

The protein belongs to the KRTAP type 28 family.

In the hair cortex, hair keratin intermediate filaments are embedded in an interfilamentous matrix, consisting of hair keratin-associated proteins (KRTAP), which are essential for the formation of a rigid and resistant hair shaft through their extensive disulfide bond cross-linking with abundant cysteine residues of hair keratins. The matrix proteins include the high-sulfur and high-glycine-tyrosine keratins. The polypeptide is Small cysteine and glycine repeat-containing protein 6 (Homo sapiens (Human)).